The chain runs to 860 residues: Protein argonaute-3 (860 aa).

In terms of domain architecture, PAZ spans 230-349; sequence PVIQFMCEVL…LPLEVCNIVA (120 aa). The region spanning 518–819 is the Piwi domain; it reads LIIVILPGKT…VAFRARYHLV (302 aa). Residues 530 to 567 are interaction with guide RNA; the sequence is YAEVKRAGDTLLGMATQCVQVKNVIKTSPQTLSNLCLK. The a divalent metal cation site is built by aspartate 598, glutamate 638, and aspartate 670. The interaction with guide RNA stretch occupies residues 758 to 805; sequence QGTSRPSHYHVLWDDNCFTADELQLLTYQLCHTYVRCTRSVSIPAPAY. A divalent metal cation is bound at residue histidine 808.

The protein belongs to the argonaute family. Ago subfamily.

The protein localises to the cytoplasm. It is found in the P-body. The enzyme catalyses Endonucleolytic cleavage to 5'-phosphomonoester.. Functionally, required for RNA-mediated gene silencing (RNAi). Binds to short RNAs such as microRNAs (miRNAs) and represses the translation of mRNAs which are complementary to them. Possesses RNA slicer activity but only on select RNAs bearing 5'- and 3'-flanking sequences to the region of guide-target complementarity. The sequence is that of Protein argonaute-3 (AGO3) from Gallus gallus (Chicken).